The following is a 423-amino-acid chain: UPF0229 protein PFLU_5583 (423 aa).

A disordered region spans residues 64–109 (LHHGRGGKQTVVHPGNKEFTTGEHIQRPQGGGGGKGPGKAGNSGEG). Gly residues predominate over residues 92 to 107 (QGGGGGKGPGKAGNSG).

The protein belongs to the UPF0229 family.

The sequence is that of UPF0229 protein PFLU_5583 from Pseudomonas fluorescens (strain SBW25).